Consider the following 651-residue polypeptide: L-aspartate oxidase, chloroplastic (651 aa).

The N-terminal 74 residues, 1–74 (MAAHVSTGNI…PISETSKPIR (74 aa)), are a transit peptide targeting the chloroplast. FAD-binding positions include 92–95 (SGVA), Lys-114, 121–128 (NTNYAQGG), and Asp-292. Catalysis depends on Arg-368, which acts as the Proton donor/acceptor. FAD contacts are provided by residues Glu-453 and 469 to 470 (SL).

This sequence belongs to the FAD-dependent oxidoreductase 2 family. NadB subfamily. As to quaternary structure, interacts in vitro with QS. FAD is required as a cofactor.

It localises to the plastid. The protein resides in the chloroplast. It carries out the reaction L-aspartate + O2 = iminosuccinate + H2O2. Its pathway is cofactor biosynthesis; NAD(+) biosynthesis; iminoaspartate from L-aspartate (oxidase route): step 1/1. Functionally, catalyzes the oxidation of L-aspartate to iminoaspartate. Can complement nadB-deficient E.coli mutant. Plays a role in stomatal immunity. The sequence is that of L-aspartate oxidase, chloroplastic from Arabidopsis thaliana (Mouse-ear cress).